A 548-amino-acid polypeptide reads, in one-letter code: Fumarate hydratase class I, aerobic (548 aa).

Positions 105, 224, and 318 each coordinate [4Fe-4S] cluster.

This sequence belongs to the class-I fumarase family. Homodimer. Requires [4Fe-4S] cluster as cofactor.

It carries out the reaction (S)-malate = fumarate + H2O. It catalyses the reaction oxaloacetate = enol-oxaloacetate. It participates in carbohydrate metabolism; tricarboxylic acid cycle; (S)-malate from fumarate: step 1/1. Functionally, catalyzes the reversible hydration of fumarate to (S)-malate. Functions as an aerobic enzyme in the direction of malate formation as part of the citric acid cycle. Accounts for about 80% of the fumarase activity when the bacteria grow aerobically. To a lesser extent, also displays D-tartrate dehydratase activity in vitro, but is not able to convert (R)-malate, L-tartrate or meso-tartrate. Can also catalyze the isomerization of enol- to keto-oxaloacetate. The sequence is that of Fumarate hydratase class I, aerobic from Escherichia coli O6:H1 (strain CFT073 / ATCC 700928 / UPEC).